Reading from the N-terminus, the 446-residue chain is N-succinylarginine dihydrolase (446 aa).

Substrate-binding positions include 19–28 (AGLSFGNVAS), asparagine 110, and 137–138 (HR). The active site involves glutamate 174. Residue arginine 213 coordinates substrate. The active site involves histidine 249. Residues aspartate 251 and asparagine 364 each coordinate substrate. The Nucleophile role is filled by cysteine 370.

This sequence belongs to the succinylarginine dihydrolase family. In terms of assembly, homodimer.

It carries out the reaction N(2)-succinyl-L-arginine + 2 H2O + 2 H(+) = N(2)-succinyl-L-ornithine + 2 NH4(+) + CO2. Its pathway is amino-acid degradation; L-arginine degradation via AST pathway; L-glutamate and succinate from L-arginine: step 2/5. Functionally, catalyzes the hydrolysis of N(2)-succinylarginine into N(2)-succinylornithine, ammonia and CO(2). The sequence is that of N-succinylarginine dihydrolase from Burkholderia ambifaria (strain ATCC BAA-244 / DSM 16087 / CCUG 44356 / LMG 19182 / AMMD) (Burkholderia cepacia (strain AMMD)).